Consider the following 302-residue polypeptide: Orotidine 5'-phosphate decarboxylase (302 aa).

The Proton donor role is filled by Lys105.

The protein belongs to the OMP decarboxylase family. Type 2 subfamily.

The enzyme catalyses orotidine 5'-phosphate + H(+) = UMP + CO2. Its pathway is pyrimidine metabolism; UMP biosynthesis via de novo pathway; UMP from orotate: step 2/2. This is Orotidine 5'-phosphate decarboxylase from Rhodopirellula baltica (strain DSM 10527 / NCIMB 13988 / SH1).